A 1382-amino-acid polypeptide reads, in one-letter code: DNA-directed RNA polymerase subunit beta' (1382 aa).

Zn(2+) contacts are provided by cysteine 70, cysteine 72, cysteine 85, and cysteine 88. Mg(2+) contacts are provided by aspartate 460, aspartate 462, and aspartate 464. 4 residues coordinate Zn(2+): cysteine 808, cysteine 882, cysteine 889, and cysteine 892.

The protein belongs to the RNA polymerase beta' chain family. In terms of assembly, the RNAP catalytic core consists of 2 alpha, 1 beta, 1 beta' and 1 omega subunit. When a sigma factor is associated with the core the holoenzyme is formed, which can initiate transcription. The cofactor is Mg(2+). Zn(2+) is required as a cofactor.

It catalyses the reaction RNA(n) + a ribonucleoside 5'-triphosphate = RNA(n+1) + diphosphate. DNA-dependent RNA polymerase catalyzes the transcription of DNA into RNA using the four ribonucleoside triphosphates as substrates. This Citrifermentans bemidjiense (strain ATCC BAA-1014 / DSM 16622 / JCM 12645 / Bem) (Geobacter bemidjiensis) protein is DNA-directed RNA polymerase subunit beta'.